Here is a 791-residue protein sequence, read N- to C-terminus: Probable potassium transporter 11 (791 aa).

Residues 1-49 lie on the Cytoplasmic side of the membrane; the sequence is MASLSESEGTNRGSMWELDQNLDQPMDEEASRLKNMYREKKFSSLLLLR. The chain crosses the membrane as a helical span at residues 50–70; that stretch reads LAFQSLGVVFGDLGTSPLYVF. The Extracellular segment spans residues 71-87; that stretch reads YNAFPHGVDDEEDVIGA. Residues 88–108 form a helical membrane-spanning segment; the sequence is LSLIIYTLTLIPLLKYVFVVL. Residues 109-175 lie on the Cytoplasmic side of the membrane; sequence RANDNGQGGT…EAHAYKRNCL (67 aa). A helical membrane pass occupies residues 176 to 196; the sequence is LIVVLIGTCTAIGDGILTPAI. Topologically, residues 197–215 are extracellular; it reads SVLSASGGIKVQNPNMSTD. A glycan (N-linked (GlcNAc...) asparagine) is linked at Asn211. Residues 216 to 236 form a helical membrane-spanning segment; sequence VVVIVSVIILIGLFSMQHYGT. Over 237–238 the chain is Cytoplasmic; it reads DK. Residues 239–259 traverse the membrane as a helical segment; the sequence is VGWLFAPIVLLWFILIGSVGA. The Extracellular segment spans residues 260 to 289; the sequence is LNIHKYKGSVLKAYNPVYIYRYFQRRNSDS. The chain crosses the membrane as a helical span at residues 290 to 310; sequence WASLGGIMLSITGTEALFADL. The Cytoplasmic segment spans residues 311-315; the sequence is CHFPV. The helical transmembrane segment at 316 to 338 threads the bilayer; it reads FAIQIAFTLIVFPCLLLAYTGQA. Topologically, residues 339–359 are extracellular; that stretch reads AYIIAHKDHVADAFYRSIPDS. A helical transmembrane segment spans residues 360-380; sequence IYWPAFVIATAAAIVASQATI. Over 381-411 the chain is Cytoplasmic; it reads SATYSIIKQALALGCFPRVKIVHTSKKFLGQ. Residues 412–432 traverse the membrane as a helical segment; it reads IYIPDINWVLLILCIAVTAGF. The Extracellular portion of the chain corresponds to 433-444; it reads KNQSQIGNAYGT. Asn434 carries N-linked (GlcNAc...) asparagine glycosylation. The helical transmembrane segment at 445–465 threads the bilayer; the sequence is AVVIVMLVTTFLMVPIMLLVW. Topologically, residues 466–468 are cytoplasmic; the sequence is KSH. The chain crosses the membrane as a helical span at residues 469–489; the sequence is WILVVTFIVLSLMVEIPYFSA. The Extracellular portion of the chain corresponds to 490–496; the sequence is CLLKIDQ. The helical transmembrane segment at 497-517 threads the bilayer; the sequence is GGWVPLVIATAFFIIMYVWHF. The Cytoplasmic portion of the chain corresponds to 518–791; sequence CTVKRYEFEM…LLNVGQIYYI (274 aa).

Belongs to the HAK/KUP transporter (TC 2.A.72.3) family.

The protein localises to the membrane. In terms of biological role, high-affinity potassium transporter. In Oryza sativa subsp. japonica (Rice), this protein is Probable potassium transporter 11.